A 422-amino-acid chain; its full sequence is MNKTHLTDQKFSDFALHPLVIKAIENQGFYHCTPIQALSFPITLAGRDVAAQAQTGTGKTLAFLASVFNYLLTNAADETRQCEQPRALIMVPTRELAIQIYTDAETLSQFTSLKMGLAYGGDGYDKQLKILESGVDILIGTPGRIIDYAKQNFIHLNALQVIVLDEADRMYDLGFIKDIRWLFRRMPPAEKRLNMLFSATLSYRVRELSFEQMNHPEYIEVEPLQKIGSQIQEELFYPSNEDKMRLLQTLIEEEWPDRCIIFANTKQRCEDIWGHLVADGHRVGLLTGDVAQRKRIQILDDFSKGYLDILVATDVAARGLHIPKVTHVFNYDLPENVEDYIHRIGRTGRAGEKGYSISLACEAFASHLSTIEACTGHRIPTSEYNKEALLTDLPQPKRLQRHHRHYAGSRNQGASRKPRSPQ.

Residues 9 to 37 (QKFSDFALHPLVIKAIENQGFYHCTPIQA) carry the Q motif motif. The 180-residue stretch at 40–219 (FPITLAGRDV…FEQMNHPEYI (180 aa)) folds into the Helicase ATP-binding domain. 53 to 60 (AQTGTGKT) provides a ligand contact to ATP. A DEAD box motif is present at residues 165-168 (DEAD). The 146-residue stretch at 245-390 (RLLQTLIEEE…TSEYNKEALL (146 aa)) folds into the Helicase C-terminal domain. The disordered stretch occupies residues 394–422 (PQPKRLQRHHRHYAGSRNQGASRKPRSPQ). The segment covering 398–407 (RLQRHHRHYA) has biased composition (basic residues).

The protein belongs to the DEAD box helicase family. RhlB subfamily. In terms of assembly, component of the RNA degradosome, which is a multiprotein complex involved in RNA processing and mRNA degradation.

The protein localises to the cytoplasm. The enzyme catalyses ATP + H2O = ADP + phosphate + H(+). In terms of biological role, DEAD-box RNA helicase involved in RNA degradation. Has RNA-dependent ATPase activity and unwinds double-stranded RNA. This Hamiltonella defensa subsp. Acyrthosiphon pisum (strain 5AT) protein is ATP-dependent RNA helicase RhlB.